A 222-amino-acid chain; its full sequence is DNA ADP-ribosyl transferase (222 aa).

A DarT domain is found at 12 to 209; that stretch reads TLIYHITHLN…PVRVRRSWYY (198 aa). Residues 16–18, G25, and L33 each bind NAD(+); that span reads HIT. Residues 38-56 form an NAD(+)-binding element region; sequence RPPTQQNVAYGHIQAHRAQ. A DNA-binding region spans residues 47–53; sequence YGHIQAH. R54 serves as a coordination point for NAD(+). Catalysis depends on R54, which acts as the Proton acceptor. 3 DNA-binding regions span residues 78–83, 148–151, and 154–158; these read RSPMLY, SYWA, and REKKQ. The interval 119–160 is ADP-ribosylating turn-turn loop; sequence TDRHAAVQYVCFFHKLEHLKALDWQAIQASYWANVREKKQAE. The active site involves E160.

The protein belongs to the DarT ADP-ribosyltransferase family. Interacts with cognate antitoxin DarG (via C-terminus); this heterodimeric complex neutralizes the toxic effect of DarT by preventing ssDNA binding to DarT and consequently inactivating the toxin by direct protein-protein interactions.

The enzyme catalyses a thymidine in DNA + NAD(+) = an N-(ADP-alpha-D-ribosyl)-thymidine in DNA + nicotinamide + H(+). Its function is as follows. Toxic component of the hybrid type II/IV toxin-antitoxin (TA) system DarTG, which plays a crucial role in controlling bacterial growth and bacteriophage infection. Its toxic effect is neutralized by cognate antitoxin DarG. In case of phage infection, DarT toxin ADP-ribosylates DNA, which inhibits both viral DNA and RNA synthesis and leads to abortive infection. ADP-ribosylates ssDNA on the second thymidine of the consensus sequence 5'-TNTC-3'; the protein does not auto-modify. Has no activity on dsDNA in vitro. This leads to a decrease in DNA replication. Upon expression in E.coli inhibits cell growth, colony formation and induces the SOS response. Expression leads to bacteriostasis; however if cells grow over an hour in the presence of toxin, growth is no longer restored on antitoxin-inducing plates. In E.coli ADP-ribosylates genomic DNA (gDNA), which induces RecA expression (a marker for DNA damage). In Thermus aquaticus (strain ATCC BAA-2747 / Y51MC23), this protein is DNA ADP-ribosyl transferase.